The primary structure comprises 235 residues: Elongation factor Tu, chloroplastic (235 aa).

Residues 1 to 125 (KNMITGAAQM…SVDSYIPTPI (125 aa)) enclose the tr-type G domain. 47–50 (NKED) serves as a coordination point for GTP.

The protein belongs to the TRAFAC class translation factor GTPase superfamily. Classic translation factor GTPase family. EF-Tu/EF-1A subfamily.

The protein resides in the plastid. The protein localises to the chloroplast. The enzyme catalyses GTP + H2O = GDP + phosphate + H(+). Functionally, GTP hydrolase that promotes the GTP-dependent binding of aminoacyl-tRNA to the A-site of ribosomes during protein biosynthesis. The sequence is that of Elongation factor Tu, chloroplastic (tufA) from Costaria costata (Five-ribbed kelp).